A 336-amino-acid chain; its full sequence is Nitrilase (336 aa).

A CN hydrolase domain is found at 5–278; that stretch reads LKVACVQAAP…EGLLYATLDP (274 aa). The active-site Proton acceptor is the glutamate 45. Lysine 127 (proton donor) is an active-site residue. Catalysis depends on cysteine 161, which acts as the Nucleophile.

It belongs to the carbon-nitrogen hydrolase superfamily. Nitrilase family.

The enzyme catalyses a nitrile + 2 H2O = a carboxylate + NH4(+). The catalysed reaction is (indol-3-yl)acetonitrile + 2 H2O = (indol-3-yl)acetate + NH4(+). It carries out the reaction phenylpropanonitrile + 2 H2O = 3-phenylpropanoate + NH4(+). Its function is as follows. Arylacetonitrilase which is capable of hydrolyzing indole-3-acetonitrile (IAN) to the plant hormone indole-3-acetate (IAA), and allows the plant pathogenic bacterium to use IAN as a sole nitrogen source. Is also able to hydrolyze phenylpropionitrile (PPN), allowing the use of this compound as a sole nitrogen source. This enzyme may represent an additional mechanism for IAA biosynthesis or may be used to degrade and assimilate aldoximes and nitriles produced during host plant secondary metabolism. This is Nitrilase from Pseudomonas syringae pv. syringae (strain B728a).